We begin with the raw amino-acid sequence, 312 residues long: Zinc finger protein 414 (312 aa).

A disordered region spans residues 1–110; the sequence is MEEKPSGPIP…RRPPPGKQIP (110 aa). A compositionally biased stretch (low complexity) spans 29–48; the sequence is SPAVPAAAPSSSMSEEPGPE. Residues 84-93 are compositionally biased toward polar residues; the sequence is GLTSIVSGTS. 3 C2H2-type zinc fingers span residues 109–133, 145–169, and 176–201; these read IPCS…LRTH, FRCS…SKLH, and FKCE…CAEH. Residues 203-312 are disordered; it reads QSPAPPPPPA…GSDAPSGACR (110 aa). Residues 213-225 show a composition bias toward basic and acidic residues; sequence LDREPPAPERPPE. Composition is skewed to low complexity over residues 227–243 and 265–285; these read DPAS…EPFT and SPPR…SSAA.

It belongs to the krueppel C2H2-type zinc-finger protein family.

It is found in the nucleus. May be involved in transcriptional regulation. The chain is Zinc finger protein 414 (ZNF414) from Homo sapiens (Human).